The sequence spans 406 residues: Flavohemoprotein (406 aa).

Positions 6–144 constitute a Globin domain; sequence VLLDKKTTEI…IADIFISVEK (139 aa). His-91 is a binding site for heme b. Active-site charge relay system residues include Tyr-101 and Glu-143. Residues 155-406 form a reductase region; the sequence is GGWTGFRDFK…LFGPLEPIAK (252 aa). Residues 158-267 enclose the FAD-binding FR-type domain; that stretch reads TGFRDFKVIK…SAPAGDFILD (110 aa). FAD-binding positions include Tyr-196 and 212-215; that span reads RQYS. 280 to 285 contacts NADP(+); that stretch reads GVGLTP. FAD is bound at residue 397 to 400; that stretch reads LFGP.

This sequence belongs to the globin family. Two-domain flavohemoproteins subfamily. The protein in the C-terminal section; belongs to the flavoprotein pyridine nucleotide cytochrome reductase family. Requires heme b as cofactor. The cofactor is FAD.

It carries out the reaction 2 nitric oxide + NADPH + 2 O2 = 2 nitrate + NADP(+) + H(+). It catalyses the reaction 2 nitric oxide + NADH + 2 O2 = 2 nitrate + NAD(+) + H(+). Its function is as follows. Is involved in NO detoxification in an aerobic process, termed nitric oxide dioxygenase (NOD) reaction that utilizes O(2) and NAD(P)H to convert NO to nitrate, which protects the bacterium from various noxious nitrogen compounds. Therefore, plays a central role in the inducible response to nitrosative stress. In Oceanobacillus iheyensis (strain DSM 14371 / CIP 107618 / JCM 11309 / KCTC 3954 / HTE831), this protein is Flavohemoprotein.